The following is a 609-amino-acid chain: Granule-bound starch synthase 1, chloroplastic/amyloplastic (609 aa).

The N-terminal 77 residues, 1–77, are a transit peptide targeting the chloroplast; it reads MSALTTSQLA…SRRFPSVVVY (77 aa). Residues 29-67 form a disordered region; it reads RHGFQGLKPRSPAGGDATSLSVTTSARATPKQQRSVQRG. Polar residues predominate over residues 46-66; sequence TSLSVTTSARATPKQQRSVQR. ADP-alpha-D-glucose is bound at residue lysine 97. Glycine 100, arginine 408, lysine 413, lysine 462, and glutamine 493 together coordinate ADP. Cysteine 337 and cysteine 529 are disulfide-bonded.

It belongs to the glycosyltransferase 1 family. Bacterial/plant glycogen synthase subfamily.

It localises to the plastid. Its subcellular location is the chloroplast. The protein resides in the amyloplast. The enzyme catalyses an NDP-alpha-D-glucose + [(1-&gt;4)-alpha-D-glucosyl](n) = [(1-&gt;4)-alpha-D-glucosyl](n+1) + a ribonucleoside 5'-diphosphate + H(+). Its pathway is glycan biosynthesis; starch biosynthesis. Functionally, required for the synthesis of amylose in endosperm. This chain is Granule-bound starch synthase 1, chloroplastic/amyloplastic (WAXY), found in Oryza sativa subsp. indica (Rice).